Reading from the N-terminus, the 405-residue chain is Acetate kinase (405 aa).

Residue asparagine 7 participates in Mg(2+) binding. Lysine 14 serves as a coordination point for ATP. Arginine 98 contacts substrate. Residue aspartate 155 is the Proton donor/acceptor of the active site. ATP-binding positions include histidine 215–glycine 219, aspartate 289–arginine 291, and glycine 337–asparagine 341. Glutamate 391 serves as a coordination point for Mg(2+).

This sequence belongs to the acetokinase family. Homodimer. Mg(2+) is required as a cofactor. It depends on Mn(2+) as a cofactor.

The protein resides in the cytoplasm. It catalyses the reaction acetate + ATP = acetyl phosphate + ADP. It participates in metabolic intermediate biosynthesis; acetyl-CoA biosynthesis; acetyl-CoA from acetate: step 1/2. Functionally, catalyzes the formation of acetyl phosphate from acetate and ATP. Can also catalyze the reverse reaction. The sequence is that of Acetate kinase from Desulfotalea psychrophila (strain LSv54 / DSM 12343).